Reading from the N-terminus, the 330-residue chain is Dimethyladenosine transferase 1, mitochondrial (330 aa).

The N-terminal 84 residues, 1-84, are a transit peptide targeting the mitochondrion; the sequence is MAQPSARVLQ…RSILRRHPQR (84 aa). S-adenosyl-L-methionine contacts are provided by residues 38-41, Asn-39, Leu-41, Gly-67, Glu-89, Asp-118, and Asn-140; that span reads QNFL.

It belongs to the class I-like SAM-binding methyltransferase superfamily. rRNA adenine N(6)-methyltransferase family. KsgA subfamily.

Its subcellular location is the mitochondrion. Its function is as follows. Probable S-adenosyl-L-methionine-dependent methyltransferase which specifically dimethylates mitochondrial 12S rRNA at the conserved stem loop. In contrast to mtTFB2, it does not have a critical role in either transcription or regulation of the copy number of mitochondrial DNA. This Drosophila melanogaster (Fruit fly) protein is Dimethyladenosine transferase 1, mitochondrial (mtTFB1).